The following is a 341-amino-acid chain: Very-long-chain 3-oxoacyl-CoA reductase (341 aa).

Residues 15–35 (VVTAFSVIGIVFTILKFTSFA) form a helical membrane-spanning segment. NADP(+)-binding residues include Val61, Asp115, Asn142, Lys177, Tyr216, Lys220, Val249, and Ser251. Tyr216 acts as the Proton donor in catalysis. Residue Lys220 is the Lowers pKa of active site Tyr of the active site.

The protein belongs to the short-chain dehydrogenases/reductases (SDR) family.

Its subcellular location is the endoplasmic reticulum membrane. The enzyme catalyses a very-long-chain (3R)-3-hydroxyacyl-CoA + NADP(+) = a very-long-chain 3-oxoacyl-CoA + NADPH + H(+). It participates in lipid metabolism; fatty acid biosynthesis. In terms of biological role, component of the microsomal membrane bound fatty acid elongation system, which produces the 26-carbon very long-chain fatty acids (VLCFA) from palmitate. Catalyzes the reduction of the 3-ketoacyl-CoA intermediate that is formed in each cycle of fatty acid elongation. VLCFAs serve as precursors for ceramide and sphingolipids. The protein is Very-long-chain 3-oxoacyl-CoA reductase of Schizosaccharomyces pombe (strain 972 / ATCC 24843) (Fission yeast).